The chain runs to 545 residues: Glucose-6-phosphate isomerase (545 aa).

Glu353 serves as the catalytic Proton donor. Active-site residues include His384 and Lys510.

The protein belongs to the GPI family.

The protein resides in the cytoplasm. It carries out the reaction alpha-D-glucose 6-phosphate = beta-D-fructose 6-phosphate. It functions in the pathway carbohydrate biosynthesis; gluconeogenesis. The protein operates within carbohydrate degradation; glycolysis; D-glyceraldehyde 3-phosphate and glycerone phosphate from D-glucose: step 2/4. Its function is as follows. Catalyzes the reversible isomerization of glucose-6-phosphate to fructose-6-phosphate. This chain is Glucose-6-phosphate isomerase, found in Aromatoleum aromaticum (strain DSM 19018 / LMG 30748 / EbN1) (Azoarcus sp. (strain EbN1)).